The sequence spans 234 residues: Large ribosomal subunit protein uL1 (234 aa).

The protein belongs to the universal ribosomal protein uL1 family. Part of the 50S ribosomal subunit.

In terms of biological role, binds directly to 23S rRNA. The L1 stalk is quite mobile in the ribosome, and is involved in E site tRNA release. Its function is as follows. Protein L1 is also a translational repressor protein, it controls the translation of the L11 operon by binding to its mRNA. The sequence is that of Large ribosomal subunit protein uL1 from Baumannia cicadellinicola subsp. Homalodisca coagulata.